The primary structure comprises 268 residues: MAELDIGQHCQVQHCRQRDFLPFVCDGCSGIFCLEHRSKDSHGCSEVNVVKERPKTDEHKSYSCSFKGCTDVELVAVICPYCEKNFCLRHRHQSDHDCEKLEVAKPRMAATQKLVRDIVDAKTGGAASKGRKGAKSSGTAAKVALMKLKMHADGDKSLPQTERTYFQVYLPKGSKEKSKAMFFCLRWSIGKVVDFAASLANLRNENNKLTAKKLRLCHVPSGEALPLDHTLERWITKEECPLYNGGNVILEYLNDEEQFLKNVDSYLE.

An N-acetylalanine modification is found at Ala2. 2 AN1-type zinc fingers span residues 4-52 (LDIG…VVKE) and 58-106 (EHKS…VAKP). Residues Cys10, Cys15, Cys25, Cys28, Cys33, His36, His42, Cys44, Cys64, Cys69, Cys79, Cys82, Cys87, His90, His96, and Cys98 each contribute to the Zn(2+) site. A ubiquitin-like region spans residues 160–260 (QTERTYFQVY…EYLNDEEQFL (101 aa)).

In terms of assembly, associates with the 26S proteasome; this association occurs upon exposure to arsenite and is reduced in the presence of ATP. Interacts (via AN1-type 1 and 2 zinc fingers) with PSMD1; this interaction is increased upon arsenite treatment and occurs in an ATP-independent manner. Interacts with PSMC4. Interacts with PSMA1. Interacts (via its ubiquitin-like region) with VCP; this interaction occurs in an arsenite-dependent manner and is necessary for the recruitment of the ubiquitin-selective ATPase VCP to stress granules (SGs).

It is found in the cytoplasm. The protein resides in the stress granule. Plays a role in the regulation of cytoplasmic stress granules (SGs) turnover. SGs are dynamic and transient cytoplasmic ribonucleoprotein assemblies important for cellular protein homeostasis when protein production is suspended after acute exogenous stress. Associates with SGs and is involved in the efficient and specific arsenite-induced clearance process of SGs through the recruitment of the ubiquitin-selective ATPase VCP and the 26S proteasome. This process requires both complexes for efficient degradation of damaged ubiquitinated SG proteins during recovery from arsenite stress, and hence avoiding aberrant cytoplasmic SGs degradation via autophagy. The sequence is that of AN1-type zinc finger protein 1 from Mus musculus (Mouse).